We begin with the raw amino-acid sequence, 648 residues long: Indolepyruvate oxidoreductase subunit IorA (648 aa).

4Fe-4S ferredoxin-type domains follow at residues 585–614 and 616–645; these read PIYQVNEDKCTGCKICINAYGCPAIYWDPE and KKAKVDPLMCWGCGGCAQVCPFDAFEKVRE. Cys594, Cys597, Cys600, Cys606, Cys625, Cys628, Cys631, and Cys635 together coordinate [4Fe-4S] cluster.

Heterodimer of the IorA and IorB subunits. Requires [4Fe-4S] cluster as cofactor.

The enzyme catalyses indole-3-pyruvate + 2 oxidized [2Fe-2S]-[ferredoxin] + CoA = (indol-3-yl)acetyl-CoA + 2 reduced [2Fe-2S]-[ferredoxin] + CO2 + H(+). In terms of biological role, catalyzes the ferredoxin-dependent oxidative decarboxylation of arylpyruvates. This Pyrococcus abyssi (strain GE5 / Orsay) protein is Indolepyruvate oxidoreductase subunit IorA (iorA).